The primary structure comprises 154 residues: Myoglobin (154 aa).

A Globin domain is found at 2-148; that stretch reads GLSDGEWQLV…FRNDMAAQYK (147 aa). Ser4 carries the phosphoserine modification. Residue His65 participates in nitrite binding. His65 lines the O2 pocket. The residue at position 68 (Thr68) is a Phosphothreonine. His94 serves as a coordination point for heme b.

This sequence belongs to the globin family. In terms of assembly, monomeric.

Its subcellular location is the cytoplasm. The protein resides in the sarcoplasm. It carries out the reaction Fe(III)-heme b-[protein] + nitric oxide + H2O = Fe(II)-heme b-[protein] + nitrite + 2 H(+). The enzyme catalyses H2O2 + AH2 = A + 2 H2O. Functionally, monomeric heme protein which primary function is to store oxygen and facilitate its diffusion within muscle tissues. Reversibly binds oxygen through a pentacoordinated heme iron and enables its timely and efficient release as needed during periods of heightened demand. Depending on the oxidative conditions of tissues and cells, and in addition to its ability to bind oxygen, it also has a nitrite reductase activity whereby it regulates the production of bioactive nitric oxide. Under stress conditions, like hypoxia and anoxia, it also protects cells against reactive oxygen species thanks to its pseudoperoxidase activity. The polypeptide is Myoglobin (MB) (Bos mutus grunniens (Wild yak)).